The primary structure comprises 204 residues: Leucyl/phenylalanyl-tRNA--protein transferase (204 aa).

Belongs to the L/F-transferase family.

It is found in the cytoplasm. It catalyses the reaction N-terminal L-lysyl-[protein] + L-leucyl-tRNA(Leu) = N-terminal L-leucyl-L-lysyl-[protein] + tRNA(Leu) + H(+). It carries out the reaction N-terminal L-arginyl-[protein] + L-leucyl-tRNA(Leu) = N-terminal L-leucyl-L-arginyl-[protein] + tRNA(Leu) + H(+). The catalysed reaction is L-phenylalanyl-tRNA(Phe) + an N-terminal L-alpha-aminoacyl-[protein] = an N-terminal L-phenylalanyl-L-alpha-aminoacyl-[protein] + tRNA(Phe). In terms of biological role, functions in the N-end rule pathway of protein degradation where it conjugates Leu, Phe and, less efficiently, Met from aminoacyl-tRNAs to the N-termini of proteins containing an N-terminal arginine or lysine. In Rhizobium etli (strain CIAT 652), this protein is Leucyl/phenylalanyl-tRNA--protein transferase.